Here is a 367-residue protein sequence, read N- to C-terminus: tRNA-specific 2-thiouridylase MnmA (367 aa).

Residues 12-19 (GMSGGVDS) and methionine 38 each bind ATP. An interaction with target base in tRNA region spans residues 98-100 (NPD). The active-site Nucleophile is the cysteine 103. Cysteine 103 and cysteine 200 are oxidised to a cystine. Position 128 (glycine 128) interacts with ATP. The interaction with tRNA stretch occupies residues 150 to 152 (KDQ). Cysteine 200 serves as the catalytic Cysteine persulfide intermediate. An interaction with tRNA region spans residues 312–313 (RY).

This sequence belongs to the MnmA/TRMU family. In terms of assembly, interacts with TusE.

The protein resides in the cytoplasm. It catalyses the reaction S-sulfanyl-L-cysteinyl-[protein] + uridine(34) in tRNA + AH2 + ATP = 2-thiouridine(34) in tRNA + L-cysteinyl-[protein] + A + AMP + diphosphate + H(+). Functionally, catalyzes the 2-thiolation of uridine at the wobble position (U34) of tRNA(Lys), tRNA(Glu) and tRNA(Gln), leading to the formation of s(2)U34, the first step of tRNA-mnm(5)s(2)U34 synthesis. Sulfur is provided by IscS, via a sulfur-relay system. Binds ATP and its substrate tRNAs. In Blochmanniella pennsylvanica (strain BPEN), this protein is tRNA-specific 2-thiouridylase MnmA.